We begin with the raw amino-acid sequence, 339 residues long: Enhancer of mRNA-decapping protein 1 (339 aa).

2 disordered regions span residues 1–240 (MMMH…PPRY) and 309–339 (FPVN…SAKK). The span at 13 to 25 (SPGSENHSNPASR) shows a compositional bias: polar residues. Composition is skewed to basic and acidic residues over residues 26 to 38 (EQSK…ERRL) and 91 to 100 (DNKEKNKKLL). The segment covering 111–131 (NFSFYSESNSNSNSNVSSNSN) has biased composition (low complexity). A compositionally biased stretch (basic and acidic residues) spans 163 to 173 (RPDKNGKKGPV). The span at 196–212 (FQRTSPKQQANTINDEN) shows a compositional bias: polar residues. Positions 213 to 237 (SSPSSSASSVSMSSPRPVAGAVAAP) are enriched in low complexity.

Belongs to the EDC family.

Its subcellular location is the cytoplasm. Functionally, mRNA-binding protein which stimulates mRNA decapping. This chain is Enhancer of mRNA-decapping protein 1 (EDC1), found in Scheffersomyces stipitis (strain ATCC 58785 / CBS 6054 / NBRC 10063 / NRRL Y-11545) (Yeast).